The chain runs to 296 residues: Large ribosomal subunit protein uL29m (296 aa).

The transit peptide at 1–19 (MSITSIRALLRSAVSLART) directs the protein to the mitochondrion.

Belongs to the universal ribosomal protein uL29 family. Component of the mitochondrial large ribosomal subunit. Mature mitochondrial ribosomes consist of a small (37S) and a large (54S) subunit. The 37S subunit contains at least 33 different proteins and 1 molecule of RNA (15S). The 54S subunit contains at least 45 different proteins and 1 molecule of RNA (21S).

The protein localises to the mitochondrion. In Lodderomyces elongisporus (strain ATCC 11503 / CBS 2605 / JCM 1781 / NBRC 1676 / NRRL YB-4239) (Yeast), this protein is Large ribosomal subunit protein uL29m (MRPL4).